A 382-amino-acid chain; its full sequence is G-box-binding factor 3 (382 aa).

Basic and acidic residues predominate over residues 1 to 16; it reads MGNSSEEPKPPTKSDK. Disordered regions lie at residues 1–26, 97–221, and 257–285; these read MGNSSEEPKPPTKSDKPSSPPVDQTN, MGSL…GVKL, and ERELKRERRKQSNRESARRSRLRKQAETE. A compositionally biased stretch (polar residues) spans 111–130; sequence TPGTLLSIDTPTKSTGNTDN. The segment covering 155-165 has biased composition (basic and acidic residues); sequence ADEHKRSRNSS. A compositionally biased stretch (low complexity) spans 166–181; the sequence is ETDGSTDGSDGNTTGA. The segment covering 182–199 has biased composition (basic and acidic residues); sequence DEPKLKRSREGTPTKDGK. The span at 202–216 shows a compositional bias: polar residues; sequence VQASSFHSVSPSSGD. The bZIP domain maps to 259–322; the sequence is ELKRERRKQS…DKLRGANATL (64 aa). The basic motif stretch occupies residues 261–280; sequence KRERRKQSNRESARRSRLRK. A leucine-zipper region spans residues 287 to 322; sequence LARKVEALTAENMALRSELNQLNEKSDKLRGANATL. Residues 329-382 are disordered; the sequence is SEPEKRVPANMLSRVKNSGAGDKNKNQGDNDSNSTSKLHQLLDTKPRAKAVAAG. Positions 357–366 are enriched in polar residues; the sequence is DNDSNSTSKL.

The protein belongs to the bZIP family. DNA-binding heterodimer. Interacts with GBF4. Interacts with BZIP16 and BZIP68. As to expression, present only in dark grown leaves and roots.

Its subcellular location is the nucleus. In terms of biological role, binds to the G-box motif (5'-CCACGTGG-3') of the rbcS-1A gene promoter. G-box and G-box-like motifs are cis-acting elements defined in promoters of certain plant genes which are regulated by such diverse stimuli as light-induction or hormone control. This Arabidopsis thaliana (Mouse-ear cress) protein is G-box-binding factor 3 (GBF3).